A 185-amino-acid polypeptide reads, in one-letter code: ATP synthase subunit b 1 (185 aa).

The chain crosses the membrane as a helical span at residues 4 to 24 (TLAIALTLATTSPAFAAGGGW).

This sequence belongs to the ATPase B chain family. In terms of assembly, F-type ATPases have 2 components, F(1) - the catalytic core - and F(0) - the membrane proton channel. F(1) has five subunits: alpha(3), beta(3), gamma(1), delta(1), epsilon(1). F(0) has three main subunits: a(1), b(2) and c(10-14). The alpha and beta chains form an alternating ring which encloses part of the gamma chain. F(1) is attached to F(0) by a central stalk formed by the gamma and epsilon chains, while a peripheral stalk is formed by the delta and b chains.

It is found in the cell inner membrane. In terms of biological role, f(1)F(0) ATP synthase produces ATP from ADP in the presence of a proton or sodium gradient. F-type ATPases consist of two structural domains, F(1) containing the extramembraneous catalytic core and F(0) containing the membrane proton channel, linked together by a central stalk and a peripheral stalk. During catalysis, ATP synthesis in the catalytic domain of F(1) is coupled via a rotary mechanism of the central stalk subunits to proton translocation. Its function is as follows. Component of the F(0) channel, it forms part of the peripheral stalk, linking F(1) to F(0). The protein is ATP synthase subunit b 1 of Ruegeria sp. (strain TM1040) (Silicibacter sp.).